Reading from the N-terminus, the 238-residue chain is Pyridoxine 5'-phosphate synthase (238 aa).

Positions 7 and 18 each coordinate 3-amino-2-oxopropyl phosphate. Catalysis depends on histidine 43, which acts as the Proton acceptor. 1-deoxy-D-xylulose 5-phosphate is bound by residues arginine 45 and histidine 50. Catalysis depends on glutamate 70, which acts as the Proton acceptor. Threonine 100 contacts 1-deoxy-D-xylulose 5-phosphate. The active-site Proton donor is histidine 190. Residues aspartate 191 and 213 to 214 contribute to the 3-amino-2-oxopropyl phosphate site; that span reads GH.

Belongs to the PNP synthase family. As to quaternary structure, homooctamer; tetramer of dimers.

It is found in the cytoplasm. The catalysed reaction is 3-amino-2-oxopropyl phosphate + 1-deoxy-D-xylulose 5-phosphate = pyridoxine 5'-phosphate + phosphate + 2 H2O + H(+). It participates in cofactor biosynthesis; pyridoxine 5'-phosphate biosynthesis; pyridoxine 5'-phosphate from D-erythrose 4-phosphate: step 5/5. Catalyzes the complicated ring closure reaction between the two acyclic compounds 1-deoxy-D-xylulose-5-phosphate (DXP) and 3-amino-2-oxopropyl phosphate (1-amino-acetone-3-phosphate or AAP) to form pyridoxine 5'-phosphate (PNP) and inorganic phosphate. The chain is Pyridoxine 5'-phosphate synthase from Parabacteroides distasonis (strain ATCC 8503 / DSM 20701 / CIP 104284 / JCM 5825 / NCTC 11152).